The primary structure comprises 436 residues: Xylose isomerase (436 aa).

Active-site residues include His-100 and Asp-103. Mg(2+)-binding residues include Glu-231, Glu-267, His-270, Asp-295, Asp-306, Asp-308, and Asp-338.

This sequence belongs to the xylose isomerase family. In terms of assembly, homotetramer. It depends on Mg(2+) as a cofactor.

It is found in the cytoplasm. The catalysed reaction is alpha-D-xylose = alpha-D-xylulofuranose. This Rhizobium etli (strain CIAT 652) protein is Xylose isomerase.